The chain runs to 61 residues: UPF0181 protein Ent638_2380 (61 aa).

This sequence belongs to the UPF0181 family.

The chain is UPF0181 protein Ent638_2380 from Enterobacter sp. (strain 638).